A 170-amino-acid chain; its full sequence is MRTLTIEPLTKDAFAPFGDVIETDGSDHFMINNGSTMRFHRLAEVDTAQPDDKAIISIFRAESLPMPLTIGMLERHPQGSQAFIPLLGNPFLIVVAPVGDAPESALTRAFVSNGRQGVNYHRGVWHHPVLTIEKQDDFLVVDRSGSGNNCDEHYFEENQRLVLDPNPQEG.

The protein belongs to the ureidoglycolate lyase family. As to quaternary structure, homodimer. Ni(2+) is required as a cofactor.

The enzyme catalyses (S)-ureidoglycolate = urea + glyoxylate. The protein operates within nitrogen metabolism; (S)-allantoin degradation. Catalyzes the catabolism of the allantoin degradation intermediate (S)-ureidoglycolate, generating urea and glyoxylate. Involved in the utilization of allantoin as nitrogen source. This chain is Ureidoglycolate lyase, found in Pseudomonas syringae pv. tomato (strain ATCC BAA-871 / DC3000).